The sequence spans 1223 residues: WD repeat-containing protein 11 (1223 aa).

2 WD repeats span residues 59 to 108 (KHKA…AQCE) and 111 to 154 (EHVK…KLWK). Serine 205 and serine 209 each carry phosphoserine. The stretch at 354–393 (KTVRPFSMVCCPVNENAAALIVSDGRVMIWELKSAVCSRN) is one WD 3 repeat. Phosphoserine is present on residues serine 401 and serine 405. 6 WD repeats span residues 470-509 (RMCPPLTTKNIKTYQPLLAVGTSNGSVLVYHLTSGLLHKE), 565-604 (NDESPIEMIKVSHLKQYLAVVFKDKPLELWDIRTCTLLRE), 707-744 (GSMGSITCIAWKGDTLVLGDMDGNLNFWDLKARVSRGI), 746-786 (THRS…MVSS), 792-830 (NVTFRILDVDWCTSDKVILASDDGCIRVLEMSMKSTCFR), and 892-939 (ALSN…HSLS).

Component of the complex WDR11 composed of C17orf75, FAM91A1 and WDR11; FAM91A1 and WDR11 are required for proper location of the complex. Interacts with GLI3; the interaction associateS EMX1 with GLI3. Interacts with TBC1D23; this interaction may be indirect and recruits TBC1D23 to AP-1-derived vesicles. Interacts (via the N-terminal and the central portion of the protein) with EMX1. As to expression, broadly expressed in various organs including brain, eye,ear, lung, heart, kideny and gonads. Cerebral cortex. The entire developing central nervous system, except for the spinal cord, reveals expression. Expressed in the neuroepithelium, including the diencephalic region that gives rise to hypothalamic neurons. In the adult brain, intense expression is restricted to the olfactory bulb, the olfaction-related piriform cortex, the granule cell layer of the cerebellum, and neurons of the hippocampal formation. The brain demonstrated expression scattered throughout the hypothalamus, sometimes in clusters of neurons.

The protein resides in the cytoplasm. The protein localises to the cytoskeleton. It localises to the cilium basal body. It is found in the nucleus. Its subcellular location is the cilium axoneme. The protein resides in the cytoplasmic vesicle. The protein localises to the golgi apparatus. It localises to the trans-Golgi network. Its function is as follows. Involved in the Hedgehog (Hh) signaling pathway, is essential for normal ciliogenesis. Regulates the proteolytic processing of GLI3 and cooperates with the transcription factor EMX1 in the induction of downstream Hh pathway gene expression and gonadotropin-releasing hormone production. WDR11 complex facilitates the tethering of Adaptor protein-1 complex (AP-1)-derived vesicles. WDR11 complex acts together with TBC1D23 to facilitate the golgin-mediated capture of vesicles generated using AP-1. This Mus musculus (Mouse) protein is WD repeat-containing protein 11 (Wdr11).